The chain runs to 298 residues: Ethanolamine ammonia-lyase small subunit (298 aa).

The tract at residues 15–43 (ASMGQDVPQPVAPSTQEGAKPQRAAPTAT) is disordered. The adenosylcob(III)alamin site is built by valine 210, glutamate 231, and cysteine 261.

This sequence belongs to the EutC family. As to quaternary structure, the basic unit is a heterodimer which dimerizes to form tetramers. The heterotetramers trimerize; 6 large subunits form a core ring with 6 small subunits projecting outwards. It depends on adenosylcob(III)alamin as a cofactor.

The protein localises to the bacterial microcompartment. The catalysed reaction is ethanolamine = acetaldehyde + NH4(+). The protein operates within amine and polyamine degradation; ethanolamine degradation. Its function is as follows. Catalyzes the deamination of various vicinal amino-alcohols to oxo compounds. Allows this organism to utilize ethanolamine as the sole source of nitrogen and carbon in the presence of external vitamin B12. The polypeptide is Ethanolamine ammonia-lyase small subunit (Salmonella arizonae (strain ATCC BAA-731 / CDC346-86 / RSK2980)).